The following is a 139-amino-acid chain: Peptide methionine sulfoxide reductase MsrB (139 aa).

The 123-residue stretch at 8-130 folds into the MsrB domain; the sequence is DQEWRQQLTD…NSASLRFHSA (123 aa). 4 residues coordinate Zn(2+): C47, C50, C96, and C99. Catalysis depends on C119, which acts as the Nucleophile.

This sequence belongs to the MsrB Met sulfoxide reductase family. It depends on Zn(2+) as a cofactor.

It carries out the reaction L-methionyl-[protein] + [thioredoxin]-disulfide + H2O = L-methionyl-(R)-S-oxide-[protein] + [thioredoxin]-dithiol. The sequence is that of Peptide methionine sulfoxide reductase MsrB from Hahella chejuensis (strain KCTC 2396).